Here is a 116-residue protein sequence, read N- to C-terminus: Iron-sulfur cluster insertion protein ErpA (116 aa).

Iron-sulfur cluster is bound by residues C44, C108, and C110.

Belongs to the HesB/IscA family. Homodimer. The cofactor is iron-sulfur cluster.

Functionally, required for insertion of 4Fe-4S clusters for at least IspG. The protein is Iron-sulfur cluster insertion protein ErpA of Stutzerimonas stutzeri (strain A1501) (Pseudomonas stutzeri).